The chain runs to 112 residues: 87 kDa annexin-binding protein (112 aa).

In terms of assembly, binds annexin.

This Physarum polycephalum (Slime mold) protein is 87 kDa annexin-binding protein.